A 214-amino-acid polypeptide reads, in one-letter code: Adenylate kinase (214 aa).

Position 10-15 (glycine 10–threonine 15) interacts with ATP. Residues serine 30–valine 59 form an NMP region. AMP is bound by residues threonine 31, arginine 36, lysine 57–valine 59, glycine 85–arginine 88, and glutamine 92. An LID region spans residues glycine 122–aspartate 159. Residues arginine 123 and valine 132–tyrosine 133 contribute to the ATP site. AMP is bound by residues arginine 156 and arginine 167. Lysine 192 carries the N6-acetyllysine modification. Lysine 200 is a binding site for ATP.

It belongs to the adenylate kinase family. Monomer.

Its subcellular location is the cytoplasm. The catalysed reaction is AMP + ATP = 2 ADP. Its pathway is purine metabolism; AMP biosynthesis via salvage pathway; AMP from ADP: step 1/1. In terms of biological role, catalyzes the reversible transfer of the terminal phosphate group between ATP and AMP. Plays an important role in cellular energy homeostasis and in adenine nucleotide metabolism. The polypeptide is Adenylate kinase (Escherichia coli O8 (strain IAI1)).